Reading from the N-terminus, the 312-residue chain is MELHFLGTGAGVPAKKRNVSALAIRFLERNGTVWLFDCGEATQHQFLHSPLSLAAVEAIFITHLHGDHILGLPGLLSSRSFQGAETPLDIYGPKGLEAFVIQALETTKTKLRFPIRFHVLAEGRIRDEEKLSVDALALDHPVESYAFRIKEQDKPGTLDAEALKAMGVPPGPLYAQLKKGETVKLADGRIVNGSAFLDESIRGRTVVIAGDTAPVKAMEAFASGADVLVHEATFASNKKDDAHLYGHSTIADACALAKRAAVGQLILTHVSSRYARNENEYRDEAAALLPNVIIAEDLFVFELEKAGRKKRD.

The Zn(2+) site is built by His-63, His-65, Asp-67, His-68, His-140, Asp-211, and His-269. Asp-67 (proton acceptor) is an active-site residue.

Belongs to the RNase Z family. As to quaternary structure, homodimer. Zn(2+) serves as cofactor.

The catalysed reaction is Endonucleolytic cleavage of RNA, removing extra 3' nucleotides from tRNA precursor, generating 3' termini of tRNAs. A 3'-hydroxy group is left at the tRNA terminus and a 5'-phosphoryl group is left at the trailer molecule.. Functionally, zinc phosphodiesterase, which displays some tRNA 3'-processing endonuclease activity. Probably involved in tRNA maturation, by removing a 3'-trailer from precursor tRNA. This is Ribonuclease Z from Shouchella clausii (strain KSM-K16) (Alkalihalobacillus clausii).